Reading from the N-terminus, the 521-residue chain is 7-deoxyloganic acid hydroxylase (521 aa).

A helical membrane pass occupies residues 8–28 (IIFLVFVSLTLYWVYRILDWV). 2 N-linked (GlcNAc...) asparagine glycosylation sites follow: Asn107 and Asn311. Heme is bound at residue Cys469.

The protein belongs to the cytochrome P450 family. As to expression, mostly present in actively growing aerial organs, including leaves, flower buds and stems, and, to a lower extent, in mature leaves, roots and opened flowers. Expressed in the leaf internal phloem-associated parenchyma (IPAP) inside the mesophyll.

The protein localises to the endoplasmic reticulum membrane. The catalysed reaction is 7-deoxyloganate + reduced [NADPH--hemoprotein reductase] + O2 = loganate + oxidized [NADPH--hemoprotein reductase] + H2O + H(+). Its pathway is alkaloid biosynthesis. Functionally, component of the seco-iridoid and derivatives monoterpenoid indole alkaloids (MIAs, e.g. vincristine, quinine, and strychnine) biosynthesis pathway. Catalyzes the conversion of 7-deoxyloganic acid into loganic acid. Not active on 7-deoxyloganetic acid. In Catharanthus roseus (Madagascar periwinkle), this protein is 7-deoxyloganic acid hydroxylase.